The sequence spans 537 residues: Multidrug resistance protein Stp (537 aa).

14 consecutive transmembrane segments (helical) span residues 6–26 (LLTL…ALIV), 46–66 (WVVA…ATLA), 77–97 (IGVS…SIAV), 104–124 (AQGL…SAAF), 136–156 (IWTA…GLLV), 163–183 (SIFY…LCYV), 200–220 (LLFI…PQIG), 223–243 (SVQT…FVWL), 262–282 (YALA…MLLL), 300–320 (LMIL…GHLV), 327–347 (VPIL…IFSE), 352–372 (ALVL…LTPI), 397–417 (AIGS…WLSA), and 478–498 (VALL…WRWF).

This sequence belongs to the major facilitator superfamily. EmrB family.

Its subcellular location is the cell membrane. In Mycobacterium tuberculosis (strain CDC 1551 / Oshkosh), this protein is Multidrug resistance protein Stp (stp).